The chain runs to 617 residues: AUGMIN subunit 3 (617 aa).

Coiled-coil stretches lie at residues 107-140, 314-334, and 481-504; these read DATLAHKAEALELQRQLRRLQTQYDLLTGQSSAL, LHSLRRKHADLVEEISTLYQK, and AIIQQIVALQSDLSSLQSDLENSL.

Belongs to the HAUS3 family. Part of the augmin complex composed of 8 subunits. The complex acts on microtubules and interacts with gamma-tubulin in spindles and the phragmoplast. Interacts with AUG1.

The protein resides in the cytoplasm. It is found in the cytoskeleton. It localises to the spindle. The protein localises to the phragmoplast. In terms of biological role, involved in microtubules reorganization during spindle and phragmoplast development. Required for gamma-tubulin localization during mitosis. In Arabidopsis thaliana (Mouse-ear cress), this protein is AUGMIN subunit 3.